Here is an 82-residue protein sequence, read N- to C-terminus: Large ribosomal subunit protein bL31 (82 aa).

This sequence belongs to the bacterial ribosomal protein bL31 family. Type A subfamily. Part of the 50S ribosomal subunit.

Its function is as follows. Binds the 23S rRNA. This Rippkaea orientalis (strain PCC 8801 / RF-1) (Cyanothece sp. (strain PCC 8801)) protein is Large ribosomal subunit protein bL31.